Consider the following 306-residue polypeptide: D-alanine--D-alanine ligase (306 aa).

The region spanning 101–303 (KYLWQGCGLP…FSQLVARILE (203 aa)) is the ATP-grasp domain. 134–189 (IDALGLPLFVKPSREGSSVGISRVNQASELQAALQEAFRFDDEVLVEAFLSGPEYT) lines the ATP pocket. Positions 257, 270, and 272 each coordinate Mg(2+).

The protein belongs to the D-alanine--D-alanine ligase family. Requires Mg(2+) as cofactor. The cofactor is Mn(2+).

The protein localises to the cytoplasm. The catalysed reaction is 2 D-alanine + ATP = D-alanyl-D-alanine + ADP + phosphate + H(+). It participates in cell wall biogenesis; peptidoglycan biosynthesis. Cell wall formation. This is D-alanine--D-alanine ligase from Erwinia tasmaniensis (strain DSM 17950 / CFBP 7177 / CIP 109463 / NCPPB 4357 / Et1/99).